Consider the following 299-residue polypeptide: ATP synthase gamma chain (299 aa).

Belongs to the ATPase gamma chain family. In terms of assembly, F-type ATPases have 2 components, CF(1) - the catalytic core - and CF(0) - the membrane proton channel. CF(1) has five subunits: alpha(3), beta(3), gamma(1), delta(1), epsilon(1). CF(0) has three main subunits: a, b and c.

The protein resides in the cell membrane. Functionally, produces ATP from ADP in the presence of a proton gradient across the membrane. The gamma chain is believed to be important in regulating ATPase activity and the flow of protons through the CF(0) complex. This Levilactobacillus brevis (strain ATCC 367 / BCRC 12310 / CIP 105137 / JCM 1170 / LMG 11437 / NCIMB 947 / NCTC 947) (Lactobacillus brevis) protein is ATP synthase gamma chain.